A 166-amino-acid polypeptide reads, in one-letter code: Protein-export protein SecB (166 aa).

Belongs to the SecB family. As to quaternary structure, homotetramer, a dimer of dimers. One homotetramer interacts with 1 SecA dimer.

It localises to the cytoplasm. Its function is as follows. One of the proteins required for the normal export of preproteins out of the cell cytoplasm. It is a molecular chaperone that binds to a subset of precursor proteins, maintaining them in a translocation-competent state. It also specifically binds to its receptor SecA. This chain is Protein-export protein SecB, found in Cereibacter sphaeroides (strain ATCC 17029 / ATH 2.4.9) (Rhodobacter sphaeroides).